A 263-amino-acid chain; its full sequence is 4-hydroxy-tetrahydrodipicolinate reductase (263 aa).

Residues 8–13 (GACGRM), aspartate 34, 99–101 (GTT), and 125–128 (SPNY) contribute to the NAD(+) site. Histidine 157 (proton donor/acceptor) is an active-site residue. Histidine 158 is a (S)-2,3,4,5-tetrahydrodipicolinate binding site. Lysine 161 functions as the Proton donor in the catalytic mechanism. 167–168 (GT) is a (S)-2,3,4,5-tetrahydrodipicolinate binding site.

It belongs to the DapB family.

The protein localises to the cytoplasm. The enzyme catalyses (S)-2,3,4,5-tetrahydrodipicolinate + NAD(+) + H2O = (2S,4S)-4-hydroxy-2,3,4,5-tetrahydrodipicolinate + NADH + H(+). It carries out the reaction (S)-2,3,4,5-tetrahydrodipicolinate + NADP(+) + H2O = (2S,4S)-4-hydroxy-2,3,4,5-tetrahydrodipicolinate + NADPH + H(+). It participates in amino-acid biosynthesis; L-lysine biosynthesis via DAP pathway; (S)-tetrahydrodipicolinate from L-aspartate: step 4/4. Functionally, catalyzes the conversion of 4-hydroxy-tetrahydrodipicolinate (HTPA) to tetrahydrodipicolinate. The chain is 4-hydroxy-tetrahydrodipicolinate reductase from Methanosarcina acetivorans (strain ATCC 35395 / DSM 2834 / JCM 12185 / C2A).